Here is a 250-residue protein sequence, read N- to C-terminus: Ribosomal RNA small subunit methyltransferase J (250 aa).

S-adenosyl-L-methionine-binding positions include Arg96–Asp97 and Asp168.

The protein belongs to the methyltransferase superfamily. RsmJ family.

The protein resides in the cytoplasm. It catalyses the reaction guanosine(1516) in 16S rRNA + S-adenosyl-L-methionine = N(2)-methylguanosine(1516) in 16S rRNA + S-adenosyl-L-homocysteine + H(+). Specifically methylates the guanosine in position 1516 of 16S rRNA. The chain is Ribosomal RNA small subunit methyltransferase J from Neisseria meningitidis serogroup B (strain ATCC BAA-335 / MC58).